The primary structure comprises 494 residues: Protein DETOXIFICATION 21 (494 aa).

N-acetylalanine is present on Ala-2. 12 helical membrane-spanning segments follow: residues 40–60 (LWIV…VSII), 73–95 (LAAY…LGMA), 123–143 (IVLT…GPIL), 158–178 (IIAL…TCQM), 188–208 (IIAY…WLLM), 217–237 (GAMT…LLFV), 268–288 (GGML…TGNL), 297–317 (ALAI…GFLA), 340–360 (LTAV…FLFL), 384–404 (LLAF…VAVG), 416–436 (LACY…VVGL), and 441–461 (VWIG…VMTL).

This sequence belongs to the multi antimicrobial extrusion (MATE) (TC 2.A.66.1) family.

Its subcellular location is the membrane. This Arabidopsis thaliana (Mouse-ear cress) protein is Protein DETOXIFICATION 21.